The sequence spans 457 residues: MQKYISEARLLLALAIPVILAQIAQTAMGFVDTVMAGGYSATDMAAVAIGTSIWLPAILFGHGLLLALTPVIAQLNGSGRRERIAHQVRQGFWLAGFVSVLIMLVLWNAGYIIRSMENIDPALAEKAVGYLRALLWGAPGYLFFQVARNQCEGLAKTKPGMVMGFIGLLVNIPVNYIFIYGHFGMPELGGVGCGVATAAVYWVMFLAMVSYIKRARSMRDIRNEKGTAKPDPAVMKRLIQLGLPIALALFFEVTLFAVVALLVSPLGIVDVAGHQIALNFSSLMFVLPMSLAAAVTIRVGYRLGQGSTLDAQTAARTGLMVGVCMATLTAIFTVSLREQIALLYNDNPEVVTLAAHLMLLAAVYQISDSIQVIGSGILRGYKDTRSIFYITFTAYWVLGLPSGYILALTDLVVEPMGPAGFWIGFIIGLTSAAIMMMLRMRFLQRMPSAIILQRASR.

A run of 12 helical transmembrane segments spans residues 11–31, 53–73, 93–113, 127–147, 160–180, 189–209, 243–263, 276–296, 314–334, 350–370, 387–407, and 418–438; these read LLAL…MGFV, IWLP…PVIA, WLAG…GYII, AVGY…FQVA, GMVM…IFIY, GGVG…LAMV, LPIA…ALLV, IALN…AAVT, AART…IFTV, VVTL…SDSI, IFYI…YILA, and PAGF…MMML.

The protein belongs to the multi antimicrobial extrusion (MATE) (TC 2.A.66.1) family. MdtK subfamily.

Its subcellular location is the cell inner membrane. In terms of biological role, multidrug efflux pump that functions probably as a Na(+)/drug antiporter. The protein is Multidrug resistance protein MdtK of Escherichia coli O9:H4 (strain HS).